The following is a 340-amino-acid chain: Nuclear hormone receptor family member nhr-197 (340 aa).

The segment at residues 1–75 (MNCVVCSGRA…VGMTLAPLND (75 aa)) is a DNA-binding region (nuclear receptor). 2 consecutive NR C4-type zinc fingers follow at residues 3-23 (CVVC…CFAC) and 39-58 (CKRI…CRAC). The NR LBD domain maps to 98 to 337 (KNDKNYSHFV…KRIMQDLFSN (240 aa)).

This sequence belongs to the nuclear hormone receptor family.

The protein localises to the nucleus. Orphan nuclear receptor. The chain is Nuclear hormone receptor family member nhr-197 (nhr-197) from Caenorhabditis elegans.